A 92-amino-acid polypeptide reads, in one-letter code: Small nuclear ribonucleoprotein E (92 aa).

A Sm domain is found at 18 to 92; the sequence is INLIFRYLQN…NITLLQSVSN (75 aa).

It belongs to the snRNP Sm proteins family. As to quaternary structure, core component of the spliceosomal U1, U2, U4 and U5 small nuclear ribonucleoproteins (snRNPs), the building blocks of the spliceosome. Most spliceosomal snRNPs contain a common set of Sm proteins, SNRPB, SNRPD1, SNRPD2, SNRPD3, SNRPE, SNRPF and SNRPG that assemble in a heptameric protein ring on the Sm site of the small nuclear RNA to form the core snRNP. Component of the U1 snRNP. The U1 snRNP is composed of the U1 snRNA and the 7 core Sm proteins SNRPB, SNRPD1, SNRPD2, SNRPD3, SNRPE, SNRPF and SNRPG, and at least three U1 snRNP-specific proteins SNRNP70/U1-70K, SNRPA/U1-A and SNRPC/U1-C. Component of the U4/U6-U5 tri-snRNP complex composed of the U4, U6 and U5 snRNAs and at least PRPF3, PRPF4, PRPF6, PRPF8, PRPF31, SNRNP200, TXNL4A, SNRNP40, SNRPB, SNRPD1, SNRPD2, SNRPD3, SNRPE, SNRPF, SNRPG, DDX23, CD2BP2, PPIH, SNU13, EFTUD2, SART1 and USP39, plus LSM2, LSM3, LSM4, LSM5, LSM6, LSM7 and LSM8. Component of the U7 snRNP complex, or U7 Sm protein core complex, that is composed of the U7 snRNA and at least LSM10, LSM11, SNRPB, SNRPD3, SNRPE, SNRPF and SNRPG; the complex does not contain SNRPD1 and SNRPD2. Component of the minor spliceosome, which splices U12-type introns. Part of the SMN-Sm complex that contains SMN1, GEMIN2/SIP1, DDX20/GEMIN3, GEMIN4, GEMIN5, GEMIN6, GEMIN7, GEMIN8, STRAP/UNRIP and the Sm proteins SNRPB, SNRPD1, SNRPD2, SNRPD3, SNRPE, SNRPF and SNRPG; catalyzes core snRNPs assembly. Forms a 6S pICln-Sm complex composed of CLNS1A/pICln, SNRPD1, SNRPD2, SNRPE, SNRPF and SNRPG; ring-like structure where CLNS1A/pICln mimics additional Sm proteins and which is unable to assemble into the core snRNP. Interacts with SMN1; the interaction is direct. Interacts with GEMIN2 (via N-terminus); the interaction is direct. Interacts with SNRPF; the interaction is direct. Interacts with SNRPG; the interaction is direct.

The protein localises to the cytoplasm. It is found in the cytosol. Its subcellular location is the nucleus. Its function is as follows. Plays a role in pre-mRNA splicing as a core component of the spliceosomal U1, U2, U4 and U5 small nuclear ribonucleoproteins (snRNPs), the building blocks of the spliceosome. Component of both the pre-catalytic spliceosome B complex and activated spliceosome C complexes. As a component of the minor spliceosome, involved in the splicing of U12-type introns in pre-mRNAs. As part of the U7 snRNP it is involved in histone 3'-end processing. This chain is Small nuclear ribonucleoprotein E (SNRPE), found in Sus scrofa (Pig).